A 1585-amino-acid polypeptide reads, in one-letter code: Maestro heat-like repeat-containing protein family member 2B (1585 aa).

HEAT repeat units lie at residues 28 to 65 (VNKE…DMRD), 228 to 263 (GYAL…AAVL), 272 to 309 (LRRS…LAHS), 310 to 346 (NPGE…ADEP), 405 to 445 (TLNR…LVIG), 531 to 569 (IGLL…STVL), 572 to 611 (TMLL…NSTE), 662 to 699 (ENHL…LTKT), 777 to 819 (SYKE…LKPQ), 964 to 1001 (HLEV…KFIP), 1021 to 1059 (PTCT…HMPV), 1112 to 1151 (ASSG…VISM), 1157 to 1195 (GLYP…QGEQ), 1258 to 1295 (GVIL…EPIL), and 1363 to 1402 (CESL…EQDD).

In terms of assembly, found in a complex at least composed of MROH2B, PRKACA isoform 2 and TCP11. Interacts with PRKACA. Interacts with TCP11. Constitutively phosphorylated on serine and threonine residues in acrosomal region of the sperm head, midpiece and flagellar regions of noncapacitated spermatozoa. Phosphorylation on tyrosine residues increases upon sperm capacitation within the acrosomal and tail regions in a protein kinase A (PKA)-dependent signaling pathway.

Its subcellular location is the cytoplasm. The protein localises to the cytoplasmic vesicle. The protein resides in the secretory vesicle. It localises to the acrosome. It is found in the cell projection. Its subcellular location is the cilium. The protein localises to the flagellum. Functionally, may play a role in the process of sperm capacitation. This Homo sapiens (Human) protein is Maestro heat-like repeat-containing protein family member 2B.